A 260-amino-acid chain; its full sequence is Ribosomal RNA small subunit methyltransferase G (260 aa).

The interval 1 to 45 (MKQRGPAGGRSSSPKPSAPGSGAGEGPDGRSAPASQKINKASAND) is disordered. Residues 9–20 (GRSSSPKPSAPG) are compositionally biased toward low complexity. Residues 33-45 (PASQKINKASAND) are compositionally biased toward polar residues. S-adenosyl-L-methionine contacts are provided by Gly123, Phe128, and Arg193.

Belongs to the methyltransferase superfamily. RNA methyltransferase RsmG family.

It is found in the cytoplasm. It carries out the reaction guanosine(527) in 16S rRNA + S-adenosyl-L-methionine = N(7)-methylguanosine(527) in 16S rRNA + S-adenosyl-L-homocysteine. Its function is as follows. Specifically methylates the N7 position of guanine in position 527 of 16S rRNA. The polypeptide is Ribosomal RNA small subunit methyltransferase G (Bradyrhizobium diazoefficiens (strain JCM 10833 / BCRC 13528 / IAM 13628 / NBRC 14792 / USDA 110)).